The primary structure comprises 671 residues: DNA ligase (671 aa).

NAD(+) contacts are provided by residues 32–36, 81–82, and Glu113; these read DAEYD and SL. Lys115 (N6-AMP-lysine intermediate) is an active-site residue. NAD(+) is bound by residues Arg136, Glu173, Lys290, and Lys314. Zn(2+) is bound by residues Cys408, Cys411, Cys426, and Cys432. The BRCT domain occupies 593-671; it reads EIDSPFAGKT…ETEMLHLLGS (79 aa).

This sequence belongs to the NAD-dependent DNA ligase family. LigA subfamily. Mg(2+) is required as a cofactor. Requires Mn(2+) as cofactor.

The enzyme catalyses NAD(+) + (deoxyribonucleotide)n-3'-hydroxyl + 5'-phospho-(deoxyribonucleotide)m = (deoxyribonucleotide)n+m + AMP + beta-nicotinamide D-nucleotide.. In terms of biological role, DNA ligase that catalyzes the formation of phosphodiester linkages between 5'-phosphoryl and 3'-hydroxyl groups in double-stranded DNA using NAD as a coenzyme and as the energy source for the reaction. It is essential for DNA replication and repair of damaged DNA. The protein is DNA ligase of Escherichia coli O6:K15:H31 (strain 536 / UPEC).